A 98-amino-acid polypeptide reads, in one-letter code: Cytochrome c-552 (98 aa).

Residues 1–18 (MKKFLLVAVVGLAGITFA) form the signal peptide. Residues Cys-28, Cys-31, His-32, and Met-77 each contribute to the heme c site.

It belongs to the cytochrome c family. In terms of processing, binds 1 heme c group covalently per subunit.

In terms of biological role, reacts with hydrogenase. This is Cytochrome c-552 from Hydrogenobacter thermophilus (strain DSM 6534 / IAM 12695 / TK-6).